Reading from the N-terminus, the 412-residue chain is ATP phosphoribosyltransferase regulatory subunit (412 aa).

The protein belongs to the class-II aminoacyl-tRNA synthetase family. HisZ subfamily. In terms of assembly, heteromultimer composed of HisG and HisZ subunits.

It is found in the cytoplasm. It functions in the pathway amino-acid biosynthesis; L-histidine biosynthesis; L-histidine from 5-phospho-alpha-D-ribose 1-diphosphate: step 1/9. In terms of biological role, required for the first step of histidine biosynthesis. May allow the feedback regulation of ATP phosphoribosyltransferase activity by histidine. The protein is ATP phosphoribosyltransferase regulatory subunit of Dehalococcoides mccartyi (strain ATCC BAA-2100 / JCM 16839 / KCTC 5957 / BAV1).